The primary structure comprises 331 residues: Ketol-acid reductoisomerase (NADP(+)) (331 aa).

The 181-residue stretch at 2–182 folds into the KARI N-terminal Rossmann domain; the sequence is IKKYYDADCN…GAGRAGILET (181 aa). NADP(+) contacts are provided by residues 25 to 28, R48, and S51; that span reads YGSQ. The active site involves H108. An NADP(+)-binding site is contributed by G134. The region spanning 183–329 is the KARI C-terminal knotted domain; it reads TFREETETDL…AELRKMMSWI (147 aa). D191, E195, E227, and E231 together coordinate Mg(2+). S252 contributes to the substrate binding site.

This sequence belongs to the ketol-acid reductoisomerase family. Mg(2+) serves as cofactor.

The enzyme catalyses (2R)-2,3-dihydroxy-3-methylbutanoate + NADP(+) = (2S)-2-acetolactate + NADPH + H(+). The catalysed reaction is (2R,3R)-2,3-dihydroxy-3-methylpentanoate + NADP(+) = (S)-2-ethyl-2-hydroxy-3-oxobutanoate + NADPH + H(+). It participates in amino-acid biosynthesis; L-isoleucine biosynthesis; L-isoleucine from 2-oxobutanoate: step 2/4. The protein operates within amino-acid biosynthesis; L-valine biosynthesis; L-valine from pyruvate: step 2/4. Functionally, involved in the biosynthesis of branched-chain amino acids (BCAA). Catalyzes an alkyl-migration followed by a ketol-acid reduction of (S)-2-acetolactate (S2AL) to yield (R)-2,3-dihydroxy-isovalerate. In the isomerase reaction, S2AL is rearranged via a Mg-dependent methyl migration to produce 3-hydroxy-3-methyl-2-ketobutyrate (HMKB). In the reductase reaction, this 2-ketoacid undergoes a metal-dependent reduction by NADPH to yield (R)-2,3-dihydroxy-isovalerate. This is Ketol-acid reductoisomerase (NADP(+)) from Brachyspira hyodysenteriae (strain ATCC 49526 / WA1).